Here is a 137-residue protein sequence, read N- to C-terminus: Small ribosomal subunit protein uS12 (137 aa).

The span at 31–41 (MSRKQTNNTAP) shows a compositional bias: polar residues. Positions 31–57 (MSRKQTNNTAPQKRGVATRVGTMTPKK) are disordered. Residue Asp102 is modified to 3-methylthioaspartic acid.

Belongs to the universal ribosomal protein uS12 family. In terms of assembly, part of the 30S ribosomal subunit. Contacts proteins S8 and S17. May interact with IF1 in the 30S initiation complex.

Its function is as follows. With S4 and S5 plays an important role in translational accuracy. Interacts with and stabilizes bases of the 16S rRNA that are involved in tRNA selection in the A site and with the mRNA backbone. Located at the interface of the 30S and 50S subunits, it traverses the body of the 30S subunit contacting proteins on the other side and probably holding the rRNA structure together. The combined cluster of proteins S8, S12 and S17 appears to hold together the shoulder and platform of the 30S subunit. This chain is Small ribosomal subunit protein uS12, found in Oenococcus oeni (strain ATCC BAA-331 / PSU-1).